The following is a 282-amino-acid chain: N-methyltransferase gliN (282 aa).

Belongs to the methyltransferase superfamily. LaeA methyltransferase family.

The protein operates within mycotoxin biosynthesis. N-methyltransferase; part of the gene cluster that mediates the biosynthesis of gliotoxin, a member of the epipolythiodioxopiperazine (ETP) class of toxins characterized by a disulfide bridged cyclic dipeptide. The first step in gliotoxin biosynthesis is the condensation of serine and phenylalanine to form the cyclo-L-phenylalanyl-L-serine diketopiperazine (DKP) by the NRPS gliP. GliP is also able to produce the DKP cyclo-L-tryptophanyl-L-serine, suggesting that the substrate specificity of the first adenylation (A) domain in gliP is sufficiently relaxed to accommodate both L-Phe and L-Trp. The cytochrome P450 monooxygenase gliC has been shown to catalyze the subsequent hydroxylation of the alpha-carbon of L-Phe in cyclo-L-phenylalanyl-L-serine whereas the second cytochrome P450 enzyme, gliF, is presumably involved in the modification of the DKP side chain. The glutathione S-transferase (GST) gliG then forms a bis-glutathionylated biosynthetic intermediate which is responsible for the sulfurization of gliotoxin. This bis-glutathionylated intermediate is subsequently processed by the gamma-glutamyl cyclotransferase gliK to remove both gamma-glutamyl moieties. Subsequent processing via gliI yields a biosynthetic intermediate, which is N-methylated via the N-methyltransferase gliN, before the gliotoxin oxidoreductase gliT-mediated disulfide bridge closure. GliN-mediated amide methylation confers stability to ETP, damping the spontaneous formation of tri- and tetrasulfides. Intracellular dithiol gliotoxin oxidized by gliT is subsequently effluxed by gliA. Gliotoxin contributes to pathogenesis during invasive aspergillosis. In macrophages and neutrophils, gliotoxin showed inhibition of various different cell functions including cytokine production, antigen presentation, phagocytosis, and production of reactive oxygen species. The sequence is that of N-methyltransferase gliN from Aspergillus fumigatus (strain ATCC MYA-4609 / CBS 101355 / FGSC A1100 / Af293) (Neosartorya fumigata).